The chain runs to 499 residues: Centrosomal protein of 57 kDa (499 aa).

Residues 1-16 are compositionally biased toward low complexity; that stretch reads MAAASVSAASDSQFSS. Positions 1 to 41 are disordered; that stretch reads MAAASVSAASDSQFSSVLAEPSRSNGNMVHHSSSPYVLYPP. Residues 22–35 are compositionally biased toward polar residues; sequence SRSNGNMVHHSSSP. Ser-53 is modified (phosphoserine). A centrosome localization domain (CLD) region spans residues 58-239; the sequence is TFAYPESNSR…RAAELQSGIE (182 aa). Residues 63 to 242 are a coiled coil; the sequence is ESNSRAIFSA…ELQSGIEANR (180 aa). Disordered stretches follow at residues 255-275 and 424-476; these read TSTR…GFRN and LEKQ…SRKN. Residues 278-490 are mediates interaction with microtubules; sequence GAQPHYRLCL…KDMQTLQNSL (213 aa). Residues 388-491 are a coiled coil; that stretch reads PSEELKDNLE…DMQTLQNSLQ (104 aa). Residues 427–443 show a composition bias toward basic and acidic residues; the sequence is QSTDKQKELKGNKKTLD. Residues 448 to 458 show a composition bias toward low complexity; that stretch reads SSSRSSVITRT. Over residues 460–474 the composition is skewed to basic and acidic residues; sequence SKKDFTKQRPGEKSR.

This sequence belongs to the translokin family. Homodimer and homooligomer. Interacts with FGF2 and RAP80. Does not interact with FGF1 or FGF2 isoform 24 kDa. Interacts with microtubules. As to expression, ubiquitous (at protein level).

It localises to the nucleus. The protein resides in the cytoplasm. It is found in the cytoskeleton. Its subcellular location is the microtubule organizing center. The protein localises to the centrosome. Functionally, centrosomal protein which may be required for microtubule attachment to centrosomes. May act by forming ring-like structures around microtubules. Mediates nuclear translocation and mitogenic activity of the internalized growth factor FGF2. This chain is Centrosomal protein of 57 kDa (Cep57), found in Rattus norvegicus (Rat).